Reading from the N-terminus, the 85-residue chain is MDPKKIARINELSKKKKTVGLTGEEKVEQAKLREEYIEGFRRSVRHHVEGIKLVDDEGNDVTPEKLRQVQREKGLHGRSLDDPNS.

The segment at 58-85 is disordered; it reads GNDVTPEKLRQVQREKGLHGRSLDDPNS. A compositionally biased stretch (basic and acidic residues) spans 62 to 85; sequence TPEKLRQVQREKGLHGRSLDDPNS.

The protein belongs to the UPF0291 family.

It is found in the cytoplasm. The protein is UPF0291 protein SAK_0343 of Streptococcus agalactiae serotype Ia (strain ATCC 27591 / A909 / CDC SS700).